The chain runs to 179 residues: DELTA-actitoxin-Afr1e (179 aa).

The interval 1-29 is N-terminal alpha-helix that contributes to the pore; it reads SADVAGAVIDGAGLGFDVLKTVLEALGNV. The N-terminal region stretch occupies residues 11-30; it reads GAGLGFDVLKTVLEALGNVK. R31 serves as a coordination point for an N-(acyl)-sphingosylphosphocholine. Residues Y51 and R53 each coordinate N-acetyl-D-glucosamine 6-sulfate. An N-(acyl)-sphingosylphosphocholine is bound by residues R53, S54, R79, G85, Y108, Y113, S114, W116, Y133, Y137, Y138, R144, and G168. The interval 105-120 is trp-rich region, which is important for the binding to lipid membrane; sequence SVPYDYNWYSNWWNVR. Residue Y138 coordinates N-acetyl-D-glucosamine 6-sulfate. A Cell attachment site, crucial for protein stability motif is present at residues 144-146; that stretch reads RGD.

It belongs to the actinoporin family. Sea anemone subfamily. In terms of assembly, octamer or nonamer in membranes. Monomer in the soluble state.

It localises to the secreted. It is found in the nematocyst. The protein localises to the target cell membrane. Its function is as follows. Pore-forming toxin (PFT) that consists of a crown-shaped octamer or nonamer that forms cation-selective hydrophilic pores of about 1.5 nm (inside) and 13 nm (outside) and causes cytolysis. It causes cardiac stimulation. Also causes hemolysis (HC(50)=1.6 nM). Interestingly, the Phe-16 is crucial for hemolysis. Pore formation is a multi-step process that involves specific recognition of membrane sphingomyelin (but neither cholesterol nor phosphatidylcholine) using aromatic rich region and adjacent phosphocholine (POC) binding site, firm binding to the membrane (mainly driven by hydrophobic interactions) accompanied by the transfer of the N-terminal region to the lipid-water interface and finally pore formation after oligomerization of monomers. It is probable that a dimeric form is an assembly intermediate before the complete oligomerization. The formation of stable pores occurs only in vesicles composed of DOPC/SM (there is no oligomerization when the PFT is treated with vesicles of DOPC or SM alone). The transmembrane pore displays 8 lateral perforations, one at each subunit-subunit interface, partially occupied by the acyl-chain region of a bridging lipid. Each pore contains 24 lipid molecules, firmly bound to each subunit, that is, 3 lipids (L1, L2, L3, L4 and/or L5) are associated to each subunit. Lipid L1 bridges 2 subunits, whereas lipids L2 and L3 bind to sites at single subunit. The polypeptide is DELTA-actitoxin-Afr1e (Actinia fragacea (Strawberry anemone)).